The primary structure comprises 190 residues: Large ribosomal subunit protein uL5 (190 aa).

Belongs to the universal ribosomal protein uL5 family. Part of the 50S ribosomal subunit; part of the 5S rRNA/L5/L18/L25 subcomplex. Contacts the 5S rRNA and the P site tRNA. Forms a bridge to the 30S subunit in the 70S ribosome.

In terms of biological role, this is one of the proteins that bind and probably mediate the attachment of the 5S RNA into the large ribosomal subunit, where it forms part of the central protuberance. In the 70S ribosome it contacts protein S13 of the 30S subunit (bridge B1b), connecting the 2 subunits; this bridge is implicated in subunit movement. Contacts the P site tRNA; the 5S rRNA and some of its associated proteins might help stabilize positioning of ribosome-bound tRNAs. This Blochmanniella floridana protein is Large ribosomal subunit protein uL5.